We begin with the raw amino-acid sequence, 339 residues long: MVREEITGSTQTLEWKCVESRVDSKRLYYGRFILSPLRKGQADTVGIALRRALLGEIEGTCITRAKFWNVPHEYSTIVGIEESIQEILLNLKEIVLRSNLYGVRDASICVKGPRYITAQDIILPPSVEIVDTTQPIANLREPVDFCIELQIKRDRGYHTELRKNSQDGSYPIDAVFMPVRNVNYSIFSCGNGNEKHEILFLEIWTNGSLTPKEALYEASRNLIDLFLPFIHTEEEGTSFEENKNRLTPPLLTFQKRFTNLKKNKKGIPLNCIFIDQLELPSRTYNCLKRANIHTLLDLLSKTEEDLMRINSFRMEDGKLIWDTLEKHLPIDLPKNKFSL.

The segment at 1-233 is alpha N-terminal domain (alpha-NTD); sequence MVREEITGST…DLFLPFIHTE (233 aa). The alpha C-terminal domain (alpha-CTD) stretch occupies residues 266-339; sequence GIPLNCIFID…IDLPKNKFSL (74 aa).

Belongs to the RNA polymerase alpha chain family. As to quaternary structure, in plastids the minimal PEP RNA polymerase catalytic core is composed of four subunits: alpha, beta, beta', and beta''. When a (nuclear-encoded) sigma factor is associated with the core the holoenzyme is formed, which can initiate transcription.

Its subcellular location is the plastid. It is found in the chloroplast. It carries out the reaction RNA(n) + a ribonucleoside 5'-triphosphate = RNA(n+1) + diphosphate. DNA-dependent RNA polymerase catalyzes the transcription of DNA into RNA using the four ribonucleoside triphosphates as substrates. The polypeptide is DNA-directed RNA polymerase subunit alpha (Saccharum hybrid (Sugarcane)).